Reading from the N-terminus, the 187-residue chain is Protein GrpE (187 aa).

The disordered stretch occupies residues 1–22 (MADEQNLDAQAQDQAAEAGAGD). The segment covering 7–22 (LDAQAQDQAAEAGAGD) has biased composition (low complexity).

It belongs to the GrpE family. In terms of assembly, homodimer.

The protein resides in the cytoplasm. In terms of biological role, participates actively in the response to hyperosmotic and heat shock by preventing the aggregation of stress-denatured proteins, in association with DnaK and GrpE. It is the nucleotide exchange factor for DnaK and may function as a thermosensor. Unfolded proteins bind initially to DnaJ; upon interaction with the DnaJ-bound protein, DnaK hydrolyzes its bound ATP, resulting in the formation of a stable complex. GrpE releases ADP from DnaK; ATP binding to DnaK triggers the release of the substrate protein, thus completing the reaction cycle. Several rounds of ATP-dependent interactions between DnaJ, DnaK and GrpE are required for fully efficient folding. The chain is Protein GrpE from Pseudomonas syringae pv. tomato (strain ATCC BAA-871 / DC3000).